Reading from the N-terminus, the 413-residue chain is RNA-binding protein 41 (413 aa).

Residues 225 to 247 (SGSGTAEKPSLLQDKGKQAAQGK) form a disordered region. Residues 309 to 387 (KVLYLKNLSP…KILVIEFAKS (79 aa)) enclose the RRM domain.

In terms of biological role, may bind RNA. The polypeptide is RNA-binding protein 41 (Rbm41) (Mus musculus (Mouse)).